The sequence spans 314 residues: Putative lipoprotein LppW (314 aa).

The N-terminal stretch at 1 to 22 (MRARPLTLLTALAAVTLVVVAG) is a signal peptide. A lipid anchor (N-palmitoyl cysteine) is attached at Cys23. The S-diacylglycerol cysteine moiety is linked to residue Cys23.

Its subcellular location is the cell membrane. This Mycobacterium bovis (strain ATCC BAA-935 / AF2122/97) protein is Putative lipoprotein LppW (lppW).